A 245-amino-acid chain; its full sequence is Thiopurine S-methyltransferase (245 aa).

Residue Ser-14 is modified to Phosphoserine. Trp-29 to Phe-40 contributes to the S-adenosyl-L-methionine binding site. Residue Phe-40 coordinates substrate. N6-acetyllysine is present on Lys-58. Residues Leu-69, Glu-90, and Arg-152 each coordinate S-adenosyl-L-methionine.

It belongs to the class I-like SAM-binding methyltransferase superfamily. TPMT family. As to quaternary structure, monomer.

It localises to the cytoplasm. The enzyme catalyses S-adenosyl-L-methionine + a thiopurine = S-adenosyl-L-homocysteine + a thiopurine S-methylether.. The chain is Thiopurine S-methyltransferase (TPMT) from Equus caballus (Horse).